The chain runs to 271 residues: Bis(5'-nucleosyl)-tetraphosphatase, symmetrical (271 aa).

This sequence belongs to the Ap4A hydrolase family.

It carries out the reaction P(1),P(4)-bis(5'-adenosyl) tetraphosphate + H2O = 2 ADP + 2 H(+). In terms of biological role, hydrolyzes diadenosine 5',5'''-P1,P4-tetraphosphate to yield ADP. This chain is Bis(5'-nucleosyl)-tetraphosphatase, symmetrical, found in Aliivibrio fischeri (strain ATCC 700601 / ES114) (Vibrio fischeri).